Here is a 437-residue protein sequence, read N- to C-terminus: Amino-acid acetyltransferase (437 aa).

Residues 289–437 (ECIRLATSFD…SKVLMLALDN (149 aa)) enclose the N-acetyltransferase domain.

This sequence belongs to the acetyltransferase family. ArgA subfamily.

The protein resides in the cytoplasm. The enzyme catalyses L-glutamate + acetyl-CoA = N-acetyl-L-glutamate + CoA + H(+). The protein operates within amino-acid biosynthesis; L-arginine biosynthesis; N(2)-acetyl-L-ornithine from L-glutamate: step 1/4. The sequence is that of Amino-acid acetyltransferase from Haemophilus ducreyi (strain 35000HP / ATCC 700724).